The primary structure comprises 264 residues: Large ribosomal subunit protein mL50 (264 aa).

The transit peptide at 1–75 directs the protein to the mitochondrion; the sequence is MSSLLKLHCI…EEGTNEASSQ (75 aa).

This sequence belongs to the mitochondrion-specific ribosomal protein mL50 family. As to quaternary structure, component of the mitochondrial large ribosomal subunit (mt-LSU). Mature yeast 74S mitochondrial ribosomes consist of a small (37S) and a large (54S) subunit. The 37S small subunit contains a 15S ribosomal RNA (15S mt-rRNA) and 34 different proteins. The 54S large subunit contains a 21S rRNA (21S mt-rRNA) and 46 different proteins.

The protein resides in the mitochondrion. Component of the mitochondrial ribosome (mitoribosome), a dedicated translation machinery responsible for the synthesis of mitochondrial genome-encoded proteins, including at least some of the essential transmembrane subunits of the mitochondrial respiratory chain. The mitoribosomes are attached to the mitochondrial inner membrane and translation products are cotranslationally integrated into the membrane. In Saccharomyces cerevisiae (strain ATCC 204508 / S288c) (Baker's yeast), this protein is Large ribosomal subunit protein mL50 (MRPL13).